The following is an 872-amino-acid chain: Cilia- and flagella-associated protein 58 (872 aa).

2 coiled-coil regions span residues 106-595 (VDSA…ADGE) and 642-839 (ESQY…QKNK).

It belongs to the CFAP58 family. In terms of assembly, interacts with ODFP2.

It is found in the cell projection. The protein localises to the cilium. It localises to the flagellum. The protein resides in the cytoplasm. Its subcellular location is the cytoskeleton. It is found in the microtubule organizing center. The protein localises to the centrosome. Its function is as follows. Has an essential role in the assembly and organization of the sperm flagellar axoneme. Required for the elongation of the primary cilium and sperm flagellar midpiece via modulation of the Notch signaling pathway. The chain is Cilia- and flagella-associated protein 58 from Homo sapiens (Human).